The primary structure comprises 160 residues: Dysbindin domain-containing protein 1 (160 aa).

Phosphoserine is present on residues Ser-3, Ser-97, and Ser-121. The interval 95-160 (ADSDDENLAT…FLTVEEPKED (66 aa)) is disordered. A compositionally biased stretch (basic and acidic residues) spans 127-143 (TRAEQNREKQPPSDPER).

This sequence belongs to the dysbindin family.

This is Dysbindin domain-containing protein 1 (Dbndd1) from Mus musculus (Mouse).